A 323-amino-acid chain; its full sequence is tRNA dimethylallyltransferase (323 aa).

Residue 27–34 (GPTGSGKT) coordinates ATP. Substrate is bound at residue 29–34 (TGSGKT). Interaction with substrate tRNA regions lie at residues 52 to 55 (DSRQ) and 176 to 180 (QRIVR).

It belongs to the IPP transferase family. As to quaternary structure, monomer. Mg(2+) serves as cofactor.

It catalyses the reaction adenosine(37) in tRNA + dimethylallyl diphosphate = N(6)-dimethylallyladenosine(37) in tRNA + diphosphate. Its function is as follows. Catalyzes the transfer of a dimethylallyl group onto the adenine at position 37 in tRNAs that read codons beginning with uridine, leading to the formation of N6-(dimethylallyl)adenosine (i(6)A). The chain is tRNA dimethylallyltransferase from Desulfovibrio desulfuricans (strain ATCC 27774 / DSM 6949 / MB).